A 162-amino-acid polypeptide reads, in one-letter code: Interleukin-2 (162 aa).

The first 20 residues, 1–20 (MYKIQLLSCIALTLALVANG), serve as a signal peptide directing secretion. An O-linked (GalNAc...) threonine glycan is attached at T23. An N-linked (GlcNAc...) asparagine glycan is attached at N70. A disulfide bridge links C79 with C134.

It belongs to the IL-2 family.

The protein resides in the secreted. Functionally, cytokine produced by activated CD4-positive helper T-cells and to a lesser extend activated CD8-positive T-cells and natural killer (NK) cells that plays pivotal roles in the immune response and tolerance. Binds to a receptor complex composed of either the high-affinity trimeric IL-2R (IL2RA/CD25, IL2RB/CD122 and IL2RG/CD132) or the low-affinity dimeric IL-2R (IL2RB and IL2RG). Interaction with the receptor leads to oligomerization and conformation changes in the IL-2R subunits resulting in downstream signaling starting with phosphorylation of JAK1 and JAK3. In turn, JAK1 and JAK3 phosphorylate the receptor to form a docking site leading to the phosphorylation of several substrates including STAT5. This process leads to activation of several pathways including STAT, phosphoinositide-3-kinase/PI3K and mitogen-activated protein kinase/MAPK pathways. Functions as a T-cell growth factor and can increase NK-cell cytolytic activity as well. Promotes strong proliferation of activated B-cells and subsequently immunoglobulin production. Plays a pivotal role in regulating the adaptive immune system by controlling the survival and proliferation of regulatory T-cells, which are required for the maintenance of immune tolerance. Moreover, participates in the differentiation and homeostasis of effector T-cell subsets, including Th1, Th2, Th17 as well as memory CD8-positive T-cells. This is Interleukin-2 (IL2) from Cervus elaphus (Red deer).